The primary structure comprises 247 residues: Small ribosomal subunit protein uS3 (247 aa).

The 71-residue stretch at 39–109 (IRSMIRSFPE…KVQIKVKEIK (71 aa)) folds into the KH type-2 domain. The segment at 224–247 (RSRRESGQKSDELVRDERTHAERG) is disordered. Positions 227-247 (RESGQKSDELVRDERTHAERG) are enriched in basic and acidic residues.

This sequence belongs to the universal ribosomal protein uS3 family. In terms of assembly, part of the 30S ribosomal subunit. Forms a tight complex with proteins S10 and S14.

In terms of biological role, binds the lower part of the 30S subunit head. Binds mRNA in the 70S ribosome, positioning it for translation. This chain is Small ribosomal subunit protein uS3, found in Treponema pallidum (strain Nichols).